Reading from the N-terminus, the 314-residue chain is tRNA pseudouridine synthase B (314 aa).

His43 is a substrate binding site. Asp48 (nucleophile) is an active-site residue. 3 residues coordinate substrate: Tyr76, Tyr179, and Leu200.

It belongs to the pseudouridine synthase TruB family. Type 1 subfamily.

The enzyme catalyses uridine(55) in tRNA = pseudouridine(55) in tRNA. Responsible for synthesis of pseudouridine from uracil-55 in the psi GC loop of transfer RNAs. The chain is tRNA pseudouridine synthase B from Salmonella choleraesuis (strain SC-B67).